The sequence spans 358 residues: MSALTIPAARRTLNNAPIIDAANGKTPTRTPVWFMRQAGRSLPEYKKVREGISMLDSCFMPELLAEITLQPVRRHDVDAAILFSDIVVPLRAAGVGVEIVAGRGPVLDAPVRSREDVLNLPILEGNVPEVEQGIGIILDELSDSQALIGFAGAPFTLASYLVEGGPSKNHEKTKAMMHGDPETWHALMARLVPTIVNSLKSQIDAGIDAMQLFDSWAGFLTERDYTEFVLPYSTEILEEVGKYQLPRIHFGVGTGELLGAMSKAGSEVMGVDWRVPLDKAAERIAAVSGPKVLQGNLDPALLFAGRAPLTKEIERIKAEAQTAIDAGHATGHIFNLGHGVLPNTVAEDITEAVSIIHS.

Residues Arg36 to Arg40, Asp85, Tyr160, Ser215, and His338 contribute to the substrate site.

Belongs to the uroporphyrinogen decarboxylase family. In terms of assembly, homodimer.

The protein localises to the cytoplasm. The catalysed reaction is uroporphyrinogen III + 4 H(+) = coproporphyrinogen III + 4 CO2. Its pathway is porphyrin-containing compound metabolism; protoporphyrin-IX biosynthesis; coproporphyrinogen-III from 5-aminolevulinate: step 4/4. Its function is as follows. Catalyzes the decarboxylation of four acetate groups of uroporphyrinogen-III to yield coproporphyrinogen-III. The chain is Uroporphyrinogen decarboxylase from Corynebacterium glutamicum (strain R).